The sequence spans 54 residues: Ovomucoid (54 aa).

One can recognise a Kazal-like domain in the interval 4–54 (VDCSEYPKPACTLEYRPLCGSDSKTYGNKCNFCNAVVESNGTLTLSHFGKC). Intrachain disulfides connect cysteine 6–cysteine 36, cysteine 14–cysteine 33, and cysteine 22–cysteine 54. Residue asparagine 43 is glycosylated (N-linked (GlcNAc...) asparagine).

It localises to the secreted. In Alectoris chukar (Chukar partridge), this protein is Ovomucoid.